We begin with the raw amino-acid sequence, 430 residues long: Drebrin-like protein (430 aa).

Residues 4–133 (NLSRNGPALQ…EPECIMEKVA (130 aa)) form the ADF-H domain. Thr-26 bears the Phosphothreonine mark. 2 positions are modified to phosphoserine: Gly-137 and Ser-160. Lys-176 is subject to N6-acetyllysine. Residues 176–231 (KDSFWAKAEKEEENRRLEEKRRAEEAQRQLEQERRERELREAARREQRYQEQGGEA) adopt a coiled-coil conformation. A phosphoserine mark is found at Ala-183 and Ser-232. The disordered stretch occupies residues 219–283 (RREQRYQEQG…SSPQPGKLRS (65 aa)). Residues 233–244 (PQRTWEQQQEVV) show a composition bias toward polar residues. Over residues 245–267 (SRNRNEQESAVHPREIFKQKERA) the composition is skewed to basic and acidic residues. A compositionally biased stretch (polar residues) spans 268 to 277 (MSTTSISSPQ). Phosphoserine is present on residues Ser-269, Ser-272, Ser-275, and Ser-283. Lys-288 is subject to N6-acetyllysine. At Thr-291 the chain carries Phosphothreonine. Phosphotyrosine is present on residues Tyr-334 and Tyr-344. The 60-residue stretch at 371-430 (GQGLCARALYDYQAADDTEISFDPENLITGIEVIDEGWWRGYGPDGHFGMFPANYVELIE) folds into the SH3 domain.

It belongs to the ABP1 family. Interacts with SHANK2, SHANK3 and SYN1. Interacts with FGD1 and DNM1. Interacts with ANKRD54. Interacts with COBL. Interacts with WASL and WIPF1. Interacts with MAP4K1 and PRAM1. Degraded by caspases during apoptosis.

It localises to the cytoplasm. Its subcellular location is the cytoskeleton. It is found in the cell projection. The protein localises to the lamellipodium. The protein resides in the ruffle. It localises to the cell cortex. Its subcellular location is the cytosol. It is found in the synapse. The protein localises to the perikaryon. The protein resides in the neuron projection. It localises to the cell membrane. Its subcellular location is the cytoplasmic vesicle. It is found in the clathrin-coated vesicle membrane. The protein localises to the golgi apparatus membrane. The protein resides in the podosome. It localises to the early endosome. Its subcellular location is the dendrite. It is found in the postsynaptic density. Functionally, adapter protein that binds F-actin and DNM1, and thereby plays a role in receptor-mediated endocytosis. Plays a role in the reorganization of the actin cytoskeleton, formation of cell projections, such as neurites, in neuron morphogenesis and synapse formation via its interaction with WASL and COBL. Does not bind G-actin and promote actin polymerization by itself. Required for the formation of organized podosome rosettes. May act as a common effector of antigen receptor-signaling pathways in leukocytes. Acts as a key component of the immunological synapse that regulates T-cell activation by bridging TCRs and the actin cytoskeleton to gene activation and endocytic processes. The sequence is that of Drebrin-like protein (DBNL) from Homo sapiens (Human).